Reading from the N-terminus, the 1106-residue chain is MPRREDIRSVLILGSGPIVIGQACEFDYSGTQAAKALKEKGIRVILLNSNPATIMTDPDLADATYVEPMTVPVVQKILEKEKPDAILPTVGGQTALNLALACNSAGILEKYNVELIGAKVDAIKKAEDRELFKKAMEKIGVRVPASGLANNLKDAVEIKNKLGLPLIVRPAFTLGGTGGGIAYTEETFEEVVSKGLKASPISQVLLEESVLGWKEFELEVMRDLADNVVIICSIENIDPMGVHTGDSITVAPQQTLSDKEYQNLRDMSIAIIREIGVETGGSNIQFAVNPTNGDVIVIEMNPRVSRSSALASKATGFPIAKIAALLSIGYTLDEIKNDITRVTPASFEPSIDYVVTKVPRFAFEKFPGTDDTLGVQMKAVGEAMAIGRTFKESFQKALRSLEIDRYGFGSDGYFQELLYSRSLNNDQRKEWIDSHLKRPNDKRIFYVKLAFDEGYTVDQIHDLCKIDRWFLWQMEGLLKLEKEYSEKGNSILYKMKQVGFSNRQLSFLKNKKQILDLLDGNLRVDLKKTEIQNLLKLSEEEIEVELGSKKILPVYKRIDTCAGEFEAYTPYFYSSYDEEDESDVTNAKSVMILGGGPNRIGQGIEFDYCCCQASYALQDLGIESIMINSNPETVSTDYDTSDRLYFEPLTLEDVYRIYQNEKPEGVIIQFGGQTPLKLAKDLEKKGVKILGTSPDSIDRAEDRKRFVEVLEKLKLNSPESGIATSMEEAREIAHKIGYPVLVRPSYVLGGRAMLIINEEKELDRYMEKAEEISKDRPLLIDSFLEDAIEVDVDALCDGKEVFVTGIMEHIEEAGIHSGDSACVLPPQTLSKNMMDEIRKATVNLALELQVKGLINIQYAVKNEILYIIEVNPRASRTVPFVSKALGHPIVKYATRIMMGESLKSLPLPKEMEFSQVSVKEVVLPFNKFPGVDTILGPEMRSTGEVMGIASTAGEAFLKSQYMAGDELPSQGTVFVSINDKTKAELLSYIKDLSELGFNLIATSGTHKFLSDNGILSSKINKVYDGIFPTALDYIRENKIHLIINTPLSRVTRDDSFTIRQAAIRFKVPCLTTSNAAKALIKGMVEMKNKGFTIHSLQEIHAMPKIL.

The tract at residues 1-402 (MPRREDIRSV…SFQKALRSLE (402 aa)) is carboxyphosphate synthetic domain. Positions 129, 169, 175, 176, 208, 210, 215, 241, 242, 243, 285, and 299 each coordinate ATP. The ATP-grasp 1 domain occupies 133 to 328 (KKAMEKIGVR…IAKIAALLSI (196 aa)). Residues Gln285, Glu299, and Asn301 each contribute to the Mg(2+) site. Positions 285, 299, and 301 each coordinate Mn(2+). The oligomerization domain stretch occupies residues 403–582 (IDRYGFGSDG…YSSYDEEDES (180 aa)). The segment at 583–964 (DVTNAKSVMI…AFLKSQYMAG (382 aa)) is carbamoyl phosphate synthetic domain. Positions 707 to 898 (VEVLEKLKLN…IVKYATRIMM (192 aa)) constitute an ATP-grasp 2 domain. Residues Arg743, Ser782, Leu784, Glu789, Gly814, Ile815, His816, Ser817, Gln857, and Glu869 each coordinate ATP. Mg(2+)-binding residues include Gln857, Glu869, and Asn871. Mn(2+) is bound by residues Gln857, Glu869, and Asn871. The region spanning 965–1106 (DELPSQGTVF…QEIHAMPKIL (142 aa)) is the MGS-like domain. An allosteric domain region spans residues 965–1106 (DELPSQGTVF…QEIHAMPKIL (142 aa)).

The protein belongs to the CarB family. As to quaternary structure, composed of two chains; the small (or glutamine) chain promotes the hydrolysis of glutamine to ammonia, which is used by the large (or ammonia) chain to synthesize carbamoyl phosphate. Tetramer of heterodimers (alpha,beta)4. The cofactor is Mg(2+). Mn(2+) serves as cofactor.

It catalyses the reaction hydrogencarbonate + L-glutamine + 2 ATP + H2O = carbamoyl phosphate + L-glutamate + 2 ADP + phosphate + 2 H(+). The enzyme catalyses hydrogencarbonate + NH4(+) + 2 ATP = carbamoyl phosphate + 2 ADP + phosphate + 2 H(+). It participates in amino-acid biosynthesis; L-arginine biosynthesis; carbamoyl phosphate from bicarbonate: step 1/1. The protein operates within pyrimidine metabolism; UMP biosynthesis via de novo pathway; (S)-dihydroorotate from bicarbonate: step 1/3. Large subunit of the glutamine-dependent carbamoyl phosphate synthetase (CPSase). CPSase catalyzes the formation of carbamoyl phosphate from the ammonia moiety of glutamine, carbonate, and phosphate donated by ATP, constituting the first step of 2 biosynthetic pathways, one leading to arginine and/or urea and the other to pyrimidine nucleotides. The large subunit (synthetase) binds the substrates ammonia (free or transferred from glutamine from the small subunit), hydrogencarbonate and ATP and carries out an ATP-coupled ligase reaction, activating hydrogencarbonate by forming carboxy phosphate which reacts with ammonia to form carbamoyl phosphate. This is Carbamoyl phosphate synthase large chain from Leptospira interrogans serogroup Icterohaemorrhagiae serovar copenhageni (strain Fiocruz L1-130).